The chain runs to 940 residues: Isoleucine--tRNA ligase (940 aa).

A 'HIGH' region motif is present at residues 58–68 (PYANGNIHIGH). Position 563 (Glu563) interacts with L-isoleucyl-5'-AMP. The 'KMSKS' region signature appears at 604–608 (KMSKS). Lys607 contacts ATP. Positions 903, 906, 923, and 926 each coordinate Zn(2+).

Belongs to the class-I aminoacyl-tRNA synthetase family. IleS type 1 subfamily. In terms of assembly, monomer. The cofactor is Zn(2+).

The protein localises to the cytoplasm. It catalyses the reaction tRNA(Ile) + L-isoleucine + ATP = L-isoleucyl-tRNA(Ile) + AMP + diphosphate. In terms of biological role, catalyzes the attachment of isoleucine to tRNA(Ile). As IleRS can inadvertently accommodate and process structurally similar amino acids such as valine, to avoid such errors it has two additional distinct tRNA(Ile)-dependent editing activities. One activity is designated as 'pretransfer' editing and involves the hydrolysis of activated Val-AMP. The other activity is designated 'posttransfer' editing and involves deacylation of mischarged Val-tRNA(Ile). The chain is Isoleucine--tRNA ligase from Buchnera aphidicola subsp. Acyrthosiphon pisum (strain 5A).